Here is a 196-residue protein sequence, read N- to C-terminus: dTTP/UTP pyrophosphatase (196 aa).

The active-site Proton acceptor is Asp-72.

This sequence belongs to the Maf family. YhdE subfamily. A divalent metal cation serves as cofactor.

It localises to the cytoplasm. The enzyme catalyses dTTP + H2O = dTMP + diphosphate + H(+). It carries out the reaction UTP + H2O = UMP + diphosphate + H(+). Its function is as follows. Nucleoside triphosphate pyrophosphatase that hydrolyzes dTTP and UTP. May have a dual role in cell division arrest and in preventing the incorporation of modified nucleotides into cellular nucleic acids. This chain is dTTP/UTP pyrophosphatase, found in Chlamydia caviae (strain ATCC VR-813 / DSM 19441 / 03DC25 / GPIC) (Chlamydophila caviae).